The sequence spans 263 residues: Norsolorinic acid ketoreductase stcE (263 aa).

NADP(+) is bound by residues Leu29, Asp76, Asn105, Tyr177, Lys181, Ile208, and Ser210. Tyr177 serves as the catalytic Proton donor. The active-site Lowers pKa of active site Tyr is the Lys181.

This sequence belongs to the short-chain dehydrogenases/reductases (SDR) family.

The catalysed reaction is (1'S)-averantin + NADP(+) = norsolorinic acid + NADPH + H(+). It functions in the pathway mycotoxin biosynthesis; sterigmatocystin biosynthesis. In terms of biological role, short chain dehydrogenase; part of the gene cluster that mediates the biosynthesis of sterigmatocystin (ST), a polyketide-derived furanocoumarin which is part of the most toxic and carcinogenic compounds among the known mycotoxins. The first step in the biosynthesis of sterigmatocystin is the production of hexanoate by the fatty acid synthase (FAS) units stcJ and stcK. The polyketide backbone is assembled by the non-reducing polyketide synthase stcA by condensation of the starter hexanoyl-CoA and 7 malonyl-CoA extender units followed by cyclization and release of norsolorinic acid. Norsolorinic acid is the first stable intermediate in the biosynthesis of sterigmatocystin and is converted into averantin (AVN) by the ketoreductase stcE which reduces the hexanoate ketone to an alcohol. Averantin is then oxidized into 5'-hydroxyaverantin (HAVN) by the cytochrome P450 monooxygenase stcF. 5'-hydroxyaverantin is further converted to 5'-oxyaverantin (OAVN) by the 5'-hydroxyaverantin dehydrogenase stcG. The next step is the conversion of OAVN into averufin (AVF) which is catalyzed by a yet to be identified enzyme. The cytochrome P450 monooxygenase stcB and the flavin-binding monooxygenase stcW are both required for the conversion of averufin to 1-hydroxyversicolorone. The esterase stcI probably catalyzes the formation of versiconal hemiacetal acetate from 1-hydroxyversicolorone. The oxydoreductase stcN then probably catalyzes the biosynthetic step from versiconal to versicolorin B (VERB). The next step is performed by the versicolorin B desaturase stcL to produce versicolorin A (VERA). The ketoreductase stcU and the cytochrome P450 monooxygenase stcS are involved in the conversion of versicolorin A to demethylsterigmatocystin. The Baeyer-Villiger oxidas stcQ and the reductase stcR might be involved in the biosynthetic step from versicolorin A to demethylsterigmatocystin. The final step in the biosynthesis of sterigmatocystin is the methylation of demethylsterigmatocystin catalyzed by the methyltransferase stcP. This is Norsolorinic acid ketoreductase stcE from Emericella nidulans (strain FGSC A4 / ATCC 38163 / CBS 112.46 / NRRL 194 / M139) (Aspergillus nidulans).